The sequence spans 519 residues: Maturase K (519 aa).

The protein belongs to the intron maturase 2 family. MatK subfamily.

The protein resides in the plastid. It is found in the chloroplast. Usually encoded in the trnK tRNA gene intron. Probably assists in splicing its own and other chloroplast group II introns. The sequence is that of Maturase K from Cycas panzhihuaensis (Dukou cycad).